Reading from the N-terminus, the 230-residue chain is Aquaporin Z (230 aa).

Helical transmembrane passes span 9–29 and 35–55; these read AELI…VLAA and IGVL…AFAI. An NPA 1 motif is present at residues 64–66; the sequence is NPA. 3 helical membrane-spanning segments follow: residues 83–103, 131–151, and 160–180; these read LPYV…IYLI, LGAG…VIMG, and GFAP…SIPV. The NPA 2 motif lies at 186-188; that stretch reads NPA. Residues 194–214 form a helical membrane-spanning segment; that stretch reads ALFVGGWALQQLWLFWVAPLI.

It belongs to the MIP/aquaporin (TC 1.A.8) family. As to quaternary structure, homotetramer.

The protein localises to the cell inner membrane. It catalyses the reaction H2O(in) = H2O(out). Its function is as follows. Channel that permits osmotically driven movement of water in both directions. It is involved in the osmoregulation and in the maintenance of cell turgor during volume expansion in rapidly growing cells. It mediates rapid entry or exit of water in response to abrupt changes in osmolarity. In Pseudomonas putida (strain ATCC 47054 / DSM 6125 / CFBP 8728 / NCIMB 11950 / KT2440), this protein is Aquaporin Z.